The sequence spans 208 residues: Type 4 adapter protein LvgA (208 aa).

The disordered stretch occupies residues 184–208 (GYGYPPESPRENYKHPVSSATTARK).

The T4BSS is a complex nanomachine composed of several subcomplexes. This subunit is part of the Type IV Coupling Complex (T4CC), a subcomplex composed of the DotLMNYZ core and the IcmSW-LvgA adapter subunits, linked by the C-terminal tail of DotL.

It localises to the cytoplasm. Component of the Dot/Icm type IVB secretion system (T4BSS), which is used to inject bacterial effector proteins into eukaryotic host cells. Part of a subcomplex which recruits effector proteins and delivers them to the core transmembrane subcomplex. Is a critical subunit for binding a subset of effector proteins. Recognizes more than one type of binding motif. May be a critical factor that confers host specificity. Necessary for full virulence of the bacterium in guinea pigs and presumably humans. The polypeptide is Type 4 adapter protein LvgA (Legionella pneumophila).